Here is a 409-residue protein sequence, read N- to C-terminus: Tryptophan synthase beta chain (409 aa).

Lys-95 is subject to N6-(pyridoxal phosphate)lysine.

Belongs to the TrpB family. In terms of assembly, tetramer of two alpha and two beta chains. Pyridoxal 5'-phosphate is required as a cofactor.

The enzyme catalyses (1S,2R)-1-C-(indol-3-yl)glycerol 3-phosphate + L-serine = D-glyceraldehyde 3-phosphate + L-tryptophan + H2O. It functions in the pathway amino-acid biosynthesis; L-tryptophan biosynthesis; L-tryptophan from chorismate: step 5/5. Its function is as follows. The beta subunit is responsible for the synthesis of L-tryptophan from indole and L-serine. The polypeptide is Tryptophan synthase beta chain (Pseudomonas savastanoi pv. phaseolicola (Pseudomonas syringae pv. phaseolicola)).